Reading from the N-terminus, the 121-residue chain is Small ribosomal subunit protein uS13 (121 aa).

The tract at residues 97-121 (VRGQRTRTNARTRRGARKTVAGKKK) is disordered. The segment covering 100-121 (QRTRTNARTRRGARKTVAGKKK) has biased composition (basic residues).

It belongs to the universal ribosomal protein uS13 family. Part of the 30S ribosomal subunit. Forms a loose heterodimer with protein S19. Forms two bridges to the 50S subunit in the 70S ribosome.

Located at the top of the head of the 30S subunit, it contacts several helices of the 16S rRNA. In the 70S ribosome it contacts the 23S rRNA (bridge B1a) and protein L5 of the 50S subunit (bridge B1b), connecting the 2 subunits; these bridges are implicated in subunit movement. Contacts the tRNAs in the A and P-sites. The sequence is that of Small ribosomal subunit protein uS13 from Parasynechococcus marenigrum (strain WH8102).